We begin with the raw amino-acid sequence, 89 residues long: Large ribosomal subunit protein bL27 (89 aa).

Residues 1-20 (MAHKKAGGSSRNGRDSIGRR) form a disordered region.

This sequence belongs to the bacterial ribosomal protein bL27 family.

The sequence is that of Large ribosomal subunit protein bL27 from Ruegeria pomeroyi (strain ATCC 700808 / DSM 15171 / DSS-3) (Silicibacter pomeroyi).